The primary structure comprises 662 residues: LIM domain kinase 1 (662 aa).

LIM zinc-binding domains are found at residues 24-83 (PVCA…RFGE) and 84-145 (LCHG…MVVT). The region spanning 166 to 259 (LVSIPACSDG…LLQLTIEHDP (94 aa)) is the PDZ domain. The disordered stretch occupies residues 262-328 (PLPRDLALPC…ASQRKDIGRS (67 aa)). A compositionally biased stretch (pro residues) spans 272-287 (SPLPDPHSPLRSPVPA). Over residues 309-320 (SPGSSSVGSPAS) the composition is skewed to low complexity. Residues 346–611 (LIHGEVLGKG…PSFSKLEQWL (266 aa)) enclose the Protein kinase domain. ATP-binding positions include 352 to 360 (LGKGCFGQA) and K375. D467 is an active-site residue.

Belongs to the protein kinase superfamily. TKL Ser/Thr protein kinase family. In terms of tissue distribution, expressed predominantly in the brain.

It localises to the cytoplasm. The protein resides in the nucleus. Its subcellular location is the cytoskeleton. The protein localises to the cell projection. It is found in the growth cone. It catalyses the reaction L-seryl-[protein] + ATP = O-phospho-L-seryl-[protein] + ADP + H(+). The enzyme catalyses L-threonyl-[protein] + ATP = O-phospho-L-threonyl-[protein] + ADP + H(+). Functionally, protein kinase which regulates actin filament dynamics. Phosphorylates and inactivates the actin binding/depolymerizing factor cofilin, thereby stabilizing the actin cytoskeleton. Required for motility of the axon growth cone. This is LIM domain kinase 1 (LIMK1) from Gallus gallus (Chicken).